The primary structure comprises 376 residues: Cyclin-D3-1 (376 aa).

Residues 298-376 form a disordered region; that stretch reads KRKSHDSSSS…HLPWAIVATP (79 aa). Residues 321–349 are compositionally biased toward low complexity; it reads NSDESSNDSWSASSCNPPTSSSSPQQQPP. The span at 354–363 shows a compositional bias: basic and acidic residues; sequence RGAEENEKKK.

Belongs to the cyclin family. Cyclin D subfamily. Interacts with the C-terminal domain of CDKA-1. Interacts with KRP1/ICK1. Interacts with KRP6. Post-translationally, phosphorylated. In terms of tissue distribution, highly expressed in roots and at lower levels in leaves and flowers. Expressed in vegetative shoot meristem and inflorescence.

In terms of biological role, involved in the control of the cell cycle at the G1/S (start) transition. Activates the G1/S phase transition in response to cytokinin hormone signal, but declines in response to sucrose starvation leading to G1 arrest. Involved in the induction of mitotic cell division. Plays an important role in the switch from cell proliferation to the final stages of differentiation during plant development. May not be involved in the activation of cell cycle in the root apical meristem (RAM) in the early phase of seed germination. Promotes divisions in the guard cells (GCs) after the guard mother cells (GMC) symmetric division. In Arabidopsis thaliana (Mouse-ear cress), this protein is Cyclin-D3-1 (CYCD3-1).